The following is a 207-amino-acid chain: Ribosomal RNA small subunit methyltransferase G (207 aa).

Residues Gly77, Phe82, Glu100 to Ser102, and Arg141 contribute to the S-adenosyl-L-methionine site.

It belongs to the methyltransferase superfamily. RNA methyltransferase RsmG family.

The protein resides in the cytoplasm. Functionally, specifically methylates the N7 position of a guanine in 16S rRNA. The chain is Ribosomal RNA small subunit methyltransferase G from Borrelia turicatae (strain 91E135).